We begin with the raw amino-acid sequence, 126 residues long: Hydrogenase maturation factor HypA (126 aa).

His2 contacts Ni(2+). Residues Cys78, Cys81, Cys97, and Cys100 each coordinate Zn(2+).

The protein belongs to the HypA/HybF family.

Involved in the maturation of [NiFe] hydrogenases. Required for nickel insertion into the metal center of the hydrogenase. This Methanococcus maripaludis (strain C7 / ATCC BAA-1331) protein is Hydrogenase maturation factor HypA.